The primary structure comprises 1097 residues: MALHLHRAERTDLLADGLGALLADPQPDPFAQELVLVAARGVERWLSQRLSLVLGCGPGRADGVCAGIAFRNPQSLIAEITGTLDDDPWSPEALAWPLLAVIDASLDEPWCRTLASHLGHFATTDAEAELRRGRRYSVARRLAGLFASYARQRPGLLAAWLDGDLGELPGDLAWQPPLWRALVTTVGADPPHVRHDKTIARLRDGPADLPARLSLFGHTRLACTDVQLLDALAVHHDLHLWLPHPSDELWRALAGFQGADGLLPRRQDTSRRAAQHPLLETLGRDVRELQRALPAARATDEFLGATTKPDTLLGWLQADIAGNAPRPAGRSLSDADRSVQVHACHGPARQIDVLREVLLGLLEDDPTLQPRDIVVMCPDIDTYAPLIVAGFGLGEVAGDCHPAHRLRVRLADRALTQTNPLLSVAAELLTIAETRATASQLLNLAQAAPVRAKFGFADDDLDTITTWVRESNIRWGFDPTHRRRYGLDTVVHNTWRLGLDRILTGVAMSEDSQAWLDTALPLDDVGSNRVELAGRLAEFVERLHHVVGGLSGARPLVAWLDALATGIDLLTACNDGWQRAQVQREFADVLARAGSRAAPLLRLPDVRALLDAQLAGRPTRANFRTGTLTVCTMVPMRSVPHRVVCLVGLDDGVFPRLSHPDGDDVLAREPMTGERDIRSEDRQLLLDAIGAATQTLVITYTGADERTGQPRPPAVPLAELLDALDQTTSAPVRERILVTHPLQPFDRKNVTPGALLGAKPFTFDPAALAAAQAAAGKRCPPTAFISGRLPAPPAADVTLADLLDFFKDPVKGFFRALDYTLPWDVDTVEDSIPVQVDALAEWTVGERMLRDMLRGLHPDDAAHSEWRRGTLPPGRLGVRRAKEIRNRARDLAAAALAHRDGHGQAHDVDVDLGDGRRLSGTVTPVFGGRTVSVTYSKLAPKHVLPAWIGLVTLAAQEPGREWSALCIGRSKTRNHIARRLFVPPPDPVAVLRELVLLYDAGRREPLPLPLKTSCAWAQARRDGQDPYPPARECWQTNRFRPGDDDAPAHVRAWGPRAPFEVLLGKPRAGEEVAGEETRLGALAARLWLPLLAAEGSV.

It belongs to the RecC family. As to quaternary structure, heterotrimer of RecB, RecC and RecD. All subunits contribute to DNA-binding.

Its function is as follows. A helicase/nuclease that prepares dsDNA breaks (DSB) for recombinational DNA repair. Binds to DSBs and unwinds DNA via a highly rapid and processive ATP-dependent bidirectional helicase activity. Holoenzyme degrades any linearized DNA that is unable to undergo homologous recombination. In the holoenzyme this subunit recognizes the wild-type Chi sequence, and when added to isolated RecB increases its ATP-dependent helicase processivity. Unlike the case in E.coli, suppresses RecA-dependent homologous recombination, is instead required for single-strand annealing pathway repair of DSB. This chain is RecBCD enzyme subunit RecC, found in Mycobacterium tuberculosis (strain CDC 1551 / Oshkosh).